The sequence spans 110 residues: MRQVTIPLIQSKSMFCVIYRSSKRDQTYLYVEKKDDFSRVPEALMKGFGQPQLAMILPLDGRKKLVNAELEKVKQALREQGYYLQLPPPPEDLLKQHLSTVGQNTSHADR.

In terms of domain architecture, YcgL spans 14–98; sequence MFCVIYRSSK…PPEDLLKQHL (85 aa).

In Salmonella arizonae (strain ATCC BAA-731 / CDC346-86 / RSK2980), this protein is Protein YcgL.